A 1328-amino-acid polypeptide reads, in one-letter code: Myb-binding protein 1A (1328 aa).

The disordered stretch occupies residues 1-22 (MESRDPAQPMSPGEATQSGARP). The tract at residues 1–582 (MESRDPAQPM…WDRMLQTLKE (582 aa)) is interaction with MYB. Serine 11 carries the phosphoserine modification. Lysine 71 and lysine 158 each carry N6-acetyllysine. Short sequence motifs (nuclear export signal) lie at residues 240–258 (SDEN…ASSV) and 263–281 (KLPA…EDKF). The tract at residues 698–753 (SEDENDRVVVTDDSDERRLKGAEDKSEEGEDNRSSESEEESEGEESEEEERDGDVD) is disordered. The span at 703 to 721 (DRVVVTDDSDERRLKGAED) shows a compositional bias: basic and acidic residues. Positions 734 to 752 (SEEESEGEESEEEERDGDV) are enriched in acidic residues. Serine 775 carries the post-translational modification Phosphoserine. A disordered region spans residues 1146–1292 (RPKLEKKDAK…KKGVLGKSPL (147 aa)). The segment covering 1147-1156 (PKLEKKDAKE) has biased composition (basic and acidic residues). Lysine 1148 is covalently cross-linked (Glycyl lysine isopeptide (Lys-Gly) (interchain with G-Cter in SUMO2)). The interval 1151 to 1328 (KKDAKEIPSA…KAQVRKAGKP (178 aa)) is required for nuclear and nucleolar localization. A phosphoserine mark is found at serine 1159 and serine 1163. Positions 1166–1184 (SKKRKKKGFLPETKKRKKR) are enriched in basic residues. Serine 1186 bears the Phosphoserine mark. A phosphothreonine mark is found at threonine 1190 and threonine 1196. Serine 1207 carries the post-translational modification Phosphoserine. The segment covering 1209–1218 (GRKKRNRTKA) has biased composition (basic residues). Phosphoserine is present on serine 1232. Threonine 1239 carries the phosphothreonine modification. Serine 1241 carries the post-translational modification Phosphoserine. Threonine 1244 carries the phosphothreonine modification. Serine 1248 and serine 1267 each carry phosphoserine. Threonine 1269 carries the phosphothreonine modification. Residues serine 1290 and serine 1303 each carry the phosphoserine modification. The disordered stretch occupies residues 1306–1328 (IRSPSLLQSGAKKKAQVRKAGKP). Residue arginine 1307 is modified to Citrulline. Residues serine 1308, serine 1310, and serine 1314 each carry the phosphoserine modification. Residues 1316 to 1328 (AKKKAQVRKAGKP) show a composition bias toward basic residues.

Belongs to the MYBBP1A family. As to quaternary structure, binds to and represses JUN and MYB via the leucine zipper regions present in these proteins. Also binds to and represses PPARGC1A: this interaction is abrogated when PPARGC1A is phosphorylated by MAPK1/ERK. Binds to and stimulates transcription by AHR. Binds to KPNA2. Interacts with CLOCK and CRY1. Component of the B-WICH complex, at least composed of SMARCA5/SNF2H, BAZ1B/WSTF, SF3B1, DEK, MYO1C, ERCC6, MYBBP1A and DDX21. In terms of processing, citrullinated by PADI4.

Its subcellular location is the cytoplasm. It localises to the nucleus. It is found in the nucleolus. Functionally, may activate or repress transcription via interactions with sequence specific DNA-binding proteins. Repression may be mediated at least in part by histone deacetylase activity (HDAC activity). Acts as a corepressor and in concert with CRY1, represses the transcription of the core circadian clock component PER2. Preferentially binds to dimethylated histone H3 'Lys-9' (H3K9me2) on the PER2 promoter. Has a role in rRNA biogenesis together with PWP1. In Homo sapiens (Human), this protein is Myb-binding protein 1A (MYBBP1A).